Reading from the N-terminus, the 371-residue chain is 3-isopropylmalate dehydrogenase (371 aa).

Residues Arg-104, Arg-114, Arg-142, and Asp-232 each contribute to the substrate site. The Mg(2+) site is built by Asp-232, Asp-256, and Asp-260. Residue Gly-290–Asn-302 participates in NAD(+) binding.

This sequence belongs to the isocitrate and isopropylmalate dehydrogenases family. LeuB type 1 subfamily. In terms of assembly, homodimer. The cofactor is Mg(2+). Mn(2+) serves as cofactor.

Its subcellular location is the cytoplasm. The enzyme catalyses (2R,3S)-3-isopropylmalate + NAD(+) = 4-methyl-2-oxopentanoate + CO2 + NADH. Its pathway is amino-acid biosynthesis; L-leucine biosynthesis; L-leucine from 3-methyl-2-oxobutanoate: step 3/4. Catalyzes the oxidation of 3-carboxy-2-hydroxy-4-methylpentanoate (3-isopropylmalate) to 3-carboxy-4-methyl-2-oxopentanoate. The product decarboxylates to 4-methyl-2 oxopentanoate. This is 3-isopropylmalate dehydrogenase from Synechococcus sp. (strain JA-2-3B'a(2-13)) (Cyanobacteria bacterium Yellowstone B-Prime).